The sequence spans 138 residues: Mediator of RNA polymerase II transcription subunit 22 (138 aa).

A coiled-coil region spans residues 13–40 (LKSYNSRLKEDIRSMRENFEEIIRLAKG).

Belongs to the Mediator complex subunit 22 family. In terms of assembly, component of the Mediator complex.

The protein resides in the nucleus. Its function is as follows. Component of the Mediator complex, a coactivator involved in the regulated transcription of nearly all RNA polymerase II-dependent genes. Mediator functions as a bridge to convey information from gene-specific regulatory proteins to the basal RNA polymerase II transcription machinery. Mediator is recruited to promoters by direct interactions with regulatory proteins and serves as a scaffold for the assembly of a functional preinitiation complex with RNA polymerase II and the general transcription factors. The protein is Mediator of RNA polymerase II transcription subunit 22 (MED22) of Anopheles gambiae (African malaria mosquito).